Here is a 377-residue protein sequence, read N- to C-terminus: MSNGIVIIGSGFAARQLVKNIRKQDASIPLTLIAADSMDEYNKPDLSHVISQGQRADDLTRQTAGEFAEQFNLRLFPHTWVTDIDAEAHVVKSQNNQWQYDKLVLATGASAFVPPVPGRELMLTLNSQQEYRACETQLRDARRVLIVGGGLIGSELAMDFCRAGKMVTLIDNAASILASLMPPEVSSRLQHRLTEMGVHLLLKSQLQGLEKTNSGILATLDRQRSIEVDTVIAATGLRPETALARRAGLTINRGVCVDSYLQTSNADIYALGDCAEINGQVLPFLQPIQLSAMVLAKNLLGNNTPLKLPAMLVKIKTPELPLHLAGETQRQDLRWQINTERQGMVARGVDDADQLRAFVVSEDRMKEAFGLLKTLSM.

Belongs to the FAD-dependent oxidoreductase family. FAD is required as a cofactor.

The protein resides in the cytoplasm. It carries out the reaction 2 reduced [nitric oxide reductase rubredoxin domain] + NAD(+) + H(+) = 2 oxidized [nitric oxide reductase rubredoxin domain] + NADH. It functions in the pathway nitrogen metabolism; nitric oxide reduction. Functionally, one of at least two accessory proteins for anaerobic nitric oxide (NO) reductase. Reduces the rubredoxin moiety of NO reductase. This is Nitric oxide reductase FlRd-NAD(+) reductase from Escherichia coli O127:H6 (strain E2348/69 / EPEC).